The chain runs to 641 residues: White-opaque regulator 3 (641 aa).

Over residues 13-27 the composition is skewed to polar residues; sequence ANVNHQQLSQDTNSI. Disordered regions lie at residues 13-38, 146-245, and 258-287; these read ANVN…QQQP, QLAS…PMTR, and PIIY…PEPR. Low complexity-rich tracts occupy residues 28 to 38 and 151 to 160; these read PQQQLQQQQQP and QNQDQNQSQN. Positions 161–172 are enriched in polar residues; it reads RYEQSSMTSIHT. Low complexity predominate over residues 173-184; that stretch reads NDNSSSVNNSPN. The span at 193–204 shows a compositional bias: polar residues; the sequence is STFQPQHSNEGS. 2 stretches are compositionally biased toward low complexity: residues 216-242 and 264-280; these read QQQQ…PQQP and SSNS…NSSS. The dksA C4-type zinc-finger motif lies at 317-337; sequence CRRCGSEIPLAERRFVLCPSC. 4 disordered regions span residues 366-409, 480-507, 522-550, and 568-641; these read LSKE…KVCQ, MSHQ…PQPH, NSGV…HNGS, and LQLQ…YPNN. Over residues 379–400 the composition is skewed to basic and acidic residues; that stretch reads QNNKSNEDQNNESRRGSQEKPA. Positions 486-495 are enriched in pro residues; that stretch reads QPPPPPPPPL. Over residues 522 to 533 the composition is skewed to polar residues; sequence NSGVAGIQQPNN. Residues 569 to 579 show a composition bias toward low complexity; sequence QLQQQQQQQQQ. A compositionally biased stretch (pro residues) spans 597–606; sequence SFPPPPPPPL. Residues 610-641 are compositionally biased toward low complexity; sequence QHQGLQQYSHAQQQQQQQHQQQQPYHQEYPNN.

It is found in the nucleus. In terms of biological role, transcription factor that modulates the white-opaque switch. The sequence is that of White-opaque regulator 3 (WOR3) from Candida albicans (strain SC5314 / ATCC MYA-2876) (Yeast).